We begin with the raw amino-acid sequence, 937 residues long: AP-2 complex subunit beta (937 aa).

T2 carries the post-translational modification N-acetylthreonine. The residue at position 4 (S4) is a Phosphoserine. K265 bears the N6-acetyllysine mark. The disordered stretch occupies residues 593–617 (LPIHHGSTDAGDSPVGTTTTTNLEQ). Residues 607 to 617 (VGTTTTTNLEQ) show a composition bias toward polar residues. A phosphotyrosine mark is found at Y737 and Y928.

This sequence belongs to the adaptor complexes large subunit family. Adaptor protein complex 2 (AP-2) is a heterotetramer composed of two large adaptins (alpha-type subunit AP2A1 or AP2A2 and beta-type subunit AP2B1), a medium adaptin (mu-type subunit AP2M1) and a small adaptin (sigma-type subunit AP2S1). Interacts with EPN1. Interacts with EPS15; clathrin competes with EPS15. Interacts with SNAP91; clathrin competes with SNAP91. Interacts with CLTC; clathrin competes with EPS15, SNAP91 and PIP5K1C. Interacts with LDLRAP1. Interacts with AMPH and BIN1. Interacts with ARF6 (GDP-bound). Interacts (dephosphorylated at Tyr-737) with ARRB1; phosphorylation of AP2B1 at Tyr-737 disrupts the interaction. Interacts with SLC2A8. Interacts with SCYL1 and SCYL2. Interacts with TGFBR1 and TGFBR2. Interacts with PIP5K1C; clathrin competes with PIP5K1C. Interacts with DENND1B. Interacts with FCHO1. Interacts with RFTN1. Interacts with KIAA1107. Together with AP2A1 or AP2A2 and AP2M1, it interacts with ADAM10; this interaction facilitates ADAM10 endocytosis from the plasma membrane during long-term potentiation in hippocampal neurons. Expressed in the brain (at protein level).

The protein localises to the cell membrane. It localises to the membrane. The protein resides in the coated pit. Its function is as follows. Component of the adaptor protein complex 2 (AP-2). Adaptor protein complexes function in protein transport via transport vesicles in different membrane traffic pathways. Adaptor protein complexes are vesicle coat components and appear to be involved in cargo selection and vesicle formation. AP-2 is involved in clathrin-dependent endocytosis in which cargo proteins are incorporated into vesicles surrounded by clathrin (clathrin-coated vesicles, CCVs) which are destined for fusion with the early endosome. The clathrin lattice serves as a mechanical scaffold but is itself unable to bind directly to membrane components. Clathrin-associated adaptor protein (AP) complexes which can bind directly to both the clathrin lattice and to the lipid and protein components of membranes are considered to be the major clathrin adaptors contributing the CCV formation. AP-2 also serves as a cargo receptor to selectively sort the membrane proteins involved in receptor-mediated endocytosis. AP-2 seems to play a role in the recycling of synaptic vesicle membranes from the presynaptic surface. AP-2 recognizes Y-X-X-[FILMV] (Y-X-X-Phi) and [ED]-X-X-X-L-[LI] endocytosis signal motifs within the cytosolic tails of transmembrane cargo molecules. AP-2 may also play a role in maintaining normal post-endocytic trafficking through the ARF6-regulated, non-clathrin pathway. During long-term potentiation in hippocampal neurons, AP-2 is responsible for the endocytosis of ADAM10. The AP-2 beta subunit acts via its C-terminal appendage domain as a scaffolding platform for endocytic accessory proteins; at least some clathrin-associated sorting proteins (CLASPs) are recognized by their [DE]-X(1,2)-F-X-X-[FL]-X-X-X-R motif. The AP-2 beta subunit binds to clathrin heavy chain, promoting clathrin lattice assembly; clathrin displaces at least some CLASPs from AP2B1 which probably then can be positioned for further coat assembly. The chain is AP-2 complex subunit beta (Ap2b1) from Mus musculus (Mouse).